Reading from the N-terminus, the 662-residue chain is Calcium-dependent protease (662 aa).

A Peptidase S8 domain is found at 196–529 (QWHLKQTTIG…YGRINALKAV (334 aa)). Active-site charge relay system residues include Asp-233, His-270, and Ser-466. Residues 535–662 (AQPEPVSIFT…IRSLTIELGF (128 aa)) enclose the P/Homo B domain.

It belongs to the peptidase S8 family.

Its subcellular location is the cytoplasm. Degrades phycobiliproteins in vitro. Has a substrate specificity similar to that of trypsin. The polypeptide is Calcium-dependent protease (prcA) (Trichormus variabilis (strain ATCC 29413 / PCC 7937) (Anabaena variabilis)).